Reading from the N-terminus, the 105-residue chain is Large ribosomal subunit protein uL24 (105 aa).

It belongs to the universal ribosomal protein uL24 family. As to quaternary structure, part of the 50S ribosomal subunit.

One of two assembly initiator proteins, it binds directly to the 5'-end of the 23S rRNA, where it nucleates assembly of the 50S subunit. In terms of biological role, one of the proteins that surrounds the polypeptide exit tunnel on the outside of the subunit. This chain is Large ribosomal subunit protein uL24, found in Staphylococcus carnosus (strain TM300).